The following is a 542-amino-acid chain: Chaperonin GroEL 1 (542 aa).

ATP is bound by residues Thr29–Pro32, Asp86–Thr90, Gly413, Asn477–Ala479, and Asp493.

This sequence belongs to the chaperonin (HSP60) family. As to quaternary structure, forms a cylinder of 14 subunits composed of two heptameric rings stacked back-to-back. Interacts with the co-chaperonin GroES.

It localises to the cytoplasm. The catalysed reaction is ATP + H2O + a folded polypeptide = ADP + phosphate + an unfolded polypeptide.. Together with its co-chaperonin GroES, plays an essential role in assisting protein folding. The GroEL-GroES system forms a nano-cage that allows encapsulation of the non-native substrate proteins and provides a physical environment optimized to promote and accelerate protein folding. This chain is Chaperonin GroEL 1, found in Kineococcus radiotolerans (strain ATCC BAA-149 / DSM 14245 / SRS30216).